We begin with the raw amino-acid sequence, 217 residues long: Somatotropin (217 aa).

Positions 1–26 (MAAGSRTSLLLAFALLCLPWLQEGSA) are cleaved as a signal peptide. His-44 provides a ligand contact to Zn(2+). The cysteines at positions 79 and 191 are disulfide-linked. A Phosphoserine modification is found at Ser-132. Glu-200 provides a ligand contact to Zn(2+). The cysteines at positions 208 and 215 are disulfide-linked.

The protein belongs to the somatotropin/prolactin family.

It localises to the secreted. In terms of biological role, plays an important role in growth control. Its major role in stimulating body growth is to stimulate the liver and other tissues to secrete IGF1. It stimulates both the differentiation and proliferation of myoblasts. It also stimulates amino acid uptake and protein synthesis in muscle and other tissues. This chain is Somatotropin (GH1), found in Macaca mulatta (Rhesus macaque).